Reading from the N-terminus, the 693-residue chain is Nitric oxide-associated protein 1 (693 aa).

Residues Arg43–Thr67 are disordered. Phosphotyrosine is present on Tyr76. The region spanning Leu203–Glu504 is the CP-type G domain. The segment at Gly286–Arg307 is disordered.

This sequence belongs to the TRAFAC class YlqF/YawG GTPase family. NOA1 subfamily. In terms of assembly, homodimer or multimer. Interacts with mitochondrial complex I, DAP3, MRPL12 and MRPS27. Expressed in tissues associated with high mitochondria content including testes, heart, liver, brain and thymus. Also expressed in various bone cell lines.

It is found in the mitochondrion inner membrane. Involved in regulation of mitochondrial protein translation and respiration. Plays a role in mitochondria-mediated cell death. May act as a scaffolding protein or stabilizer of respiratory chain supercomplexes. Binds GTP. This Mus musculus (Mouse) protein is Nitric oxide-associated protein 1 (Noa1).